A 147-amino-acid chain; its full sequence is D-aminoacyl-tRNA deacylase (147 aa).

The Gly-cisPro motif, important for rejection of L-amino acids signature appears at 136–137 (GP).

Belongs to the DTD family. Homodimer.

It localises to the cytoplasm. It carries out the reaction glycyl-tRNA(Ala) + H2O = tRNA(Ala) + glycine + H(+). The catalysed reaction is a D-aminoacyl-tRNA + H2O = a tRNA + a D-alpha-amino acid + H(+). Functionally, an aminoacyl-tRNA editing enzyme that deacylates mischarged D-aminoacyl-tRNAs. Also deacylates mischarged glycyl-tRNA(Ala), protecting cells against glycine mischarging by AlaRS. Acts via tRNA-based rather than protein-based catalysis; rejects L-amino acids rather than detecting D-amino acids in the active site. By recycling D-aminoacyl-tRNA to D-amino acids and free tRNA molecules, this enzyme counteracts the toxicity associated with the formation of D-aminoacyl-tRNA entities in vivo and helps enforce protein L-homochirality. The sequence is that of D-aminoacyl-tRNA deacylase from Streptococcus equi subsp. zooepidemicus (strain MGCS10565).